Consider the following 79-residue polypeptide: MRVLFIIAGLALLSVVCYTSEMKERSSFNEVLSEFFAADEPQERDCLGQWASCEPKNSKCCPNYACTWKYPWCRYRAGK.

The N-terminal stretch at 1-19 is a signal peptide; sequence MRVLFIIAGLALLSVVCYT. A propeptide spanning residues 20-44 is cleaved from the precursor; sequence SEMKERSSFNEVLSEFFAADEPQER. Disulfide bonds link C46–C61, C53–C66, and C60–C73. A77 carries the post-translational modification Alanine amide.

Belongs to the neurotoxin 03 (Tx2) family. 01 subfamily. Expressed by the venom gland.

Its subcellular location is the secreted. Functionally, probable ion channel inhibitor. Shows insecticidal activity when injected into mealworms. The polypeptide is Orally active insecticidal peptide (Selenotypus plumipes (Australian featherleg tarantula)).